We begin with the raw amino-acid sequence, 377 residues long: UPF0754 membrane protein YheB (377 aa).

A run of 2 helical transmembrane segments spans residues 1 to 21 (MGIA…GAVT) and 357 to 377 (YLGG…VILF).

It belongs to the UPF0754 family.

Its subcellular location is the cell membrane. This chain is UPF0754 membrane protein YheB (yheB), found in Bacillus subtilis (strain 168).